Here is a 1070-residue protein sequence, read N- to C-terminus: Isoleucine--tRNA ligase (1070 aa).

The 'HIGH' region motif lies at 50–60; the sequence is PYTSGAAHMGT. Positions 606 to 610 match the 'KMSKS' region motif; the sequence is GMSKS. Lysine 609 is a binding site for ATP.

Belongs to the class-I aminoacyl-tRNA synthetase family. IleS type 2 subfamily. Monomer. Zn(2+) is required as a cofactor.

It localises to the cytoplasm. It carries out the reaction tRNA(Ile) + L-isoleucine + ATP = L-isoleucyl-tRNA(Ile) + AMP + diphosphate. In terms of biological role, catalyzes the attachment of isoleucine to tRNA(Ile). As IleRS can inadvertently accommodate and process structurally similar amino acids such as valine, to avoid such errors it has two additional distinct tRNA(Ile)-dependent editing activities. One activity is designated as 'pretransfer' editing and involves the hydrolysis of activated Val-AMP. The other activity is designated 'posttransfer' editing and involves deacylation of mischarged Val-tRNA(Ile). In Halobacterium salinarum (strain ATCC 700922 / JCM 11081 / NRC-1) (Halobacterium halobium), this protein is Isoleucine--tRNA ligase.